The chain runs to 105 residues: Met repressor (105 aa).

The protein belongs to the MetJ family. Homodimer.

It is found in the cytoplasm. In terms of biological role, this regulatory protein, when combined with SAM (S-adenosylmethionine) represses the expression of the methionine regulon and of enzymes involved in SAM synthesis. The sequence is that of Met repressor from Vibrio vulnificus (strain CMCP6).